We begin with the raw amino-acid sequence, 405 residues long: Scarecrow-like protein 23 (405 aa).

The segment at 1–20 is disordered; it reads MTTKRIDRDLPSSDDPSSAK. In terms of domain architecture, GRAS spans 31–400; the sequence is ENDGAAAIKL…LSLLTASAWK (370 aa). A leucine repeat I (LRI) region spans residues 38-102; the sequence is IKLLSLLLQC…ISSYLSGACS (65 aa). A LxCxE motif motif is present at residues 45-49; that stretch reads LQCAE. The VHIID stretch occupies residues 121–186; that stretch reads LQTYNSVSPL…RKLRSIRITG (66 aa). The VHIID motif lies at 152–156; sequence VHIID. Positions 196-228 are leucine repeat II (LRII); that stretch reads STGRRLADFASSLNLPFEFHPIEGIIGNLIDPS. A PFYRE region spans residues 238 to 327; it reads VVVHWMQHRL…QIVLGTEIRN (90 aa). Residues 330–400 are SAW; that stretch reads AHGGGRRKRM…LSLLTASAWK (71 aa).

The protein belongs to the GRAS family. In terms of assembly, interacts with SHR. As to expression, expressed in seedlings, cotyledons, shoot apex, leaves and flowers.

It is found in the nucleus. Its function is as follows. Probable transcription factor involved in plant development. This is Scarecrow-like protein 23 (SCL23) from Arabidopsis thaliana (Mouse-ear cress).